Here is a 253-residue protein sequence, read N- to C-terminus: DnaJ homolog subfamily C member 8 (253 aa).

A2 is subject to N-acetylalanine. S35 carries the phosphoserine modification. Residues 57–124 (NPFEVLQIDP…QKKRALDVIQ (68 aa)) form the J domain. Position 146 is an N6-acetyllysine (K146). Residues 181 to 222 (EAKEMHERKRQREEEIEAQEKAKREREWQKNFEESRDGRVDS) are compositionally biased toward basic and acidic residues. Residues 181–253 (EAKEMHERKR…PPKVKMEQRE (73 aa)) are disordered. 2 short sequence motifs (nuclear localization signal) span residues 189–192 (KRQR) and 203–206 (KRER). At S222 the chain carries Phosphoserine. Residues 231–240 (KGKKEKKNRT) show a composition bias toward basic residues. The segment at 232-253 (GKKEKKNRTFLRPPKVKMEQRE) is essential for polyglutamine aggregation suppression.

In terms of assembly, interacts with SRPK1. Interacts with HSP70 (HSPA1A or HSPA1B). In terms of tissue distribution, ubiquitous.

Its subcellular location is the nucleus. Functionally, suppresses polyglutamine (polyQ) aggregation of ATXN3 in neuronal cells. The sequence is that of DnaJ homolog subfamily C member 8 (DNAJC8) from Homo sapiens (Human).